Reading from the N-terminus, the 213-residue chain is Probable nicotinate-nucleotide adenylyltransferase (213 aa).

Belongs to the NadD family.

The enzyme catalyses nicotinate beta-D-ribonucleotide + ATP + H(+) = deamido-NAD(+) + diphosphate. It functions in the pathway cofactor biosynthesis; NAD(+) biosynthesis; deamido-NAD(+) from nicotinate D-ribonucleotide: step 1/1. Its function is as follows. Catalyzes the reversible adenylation of nicotinate mononucleotide (NaMN) to nicotinic acid adenine dinucleotide (NaAD). The polypeptide is Probable nicotinate-nucleotide adenylyltransferase (Escherichia coli O139:H28 (strain E24377A / ETEC)).